The following is a 1161-amino-acid chain: Cingulin (1161 aa).

Residues 1–403 (MSSLSADRKP…SLIHERFCGV (403 aa)) are head. 6 disordered regions span residues 29–53 (GGFP…SPSK), 79–309 (SYGV…LGRD), 649–678 (QSEL…KRET), 699–721 (SKAI…ESNL), 739–773 (RLHS…AASR), and 1123–1161 (QSRR…TTSC). Positions 51–65 (PSKYGVAVRVQGISG) match the ZIM motif. 2 stretches are compositionally biased toward polar residues: residues 84 to 104 (LKTQ…SPYN) and 117 to 129 (PQGS…QPSS). The span at 189 to 203 (NGIGSSLNGTGLNGS) shows a compositional bias: low complexity. The span at 273–305 (EASSTSPTINPYAPNTSATVPKLNSTKPSSTGS) shows a compositional bias: polar residues. Residues 413–1128 (SNMKTELEQA…RKIQQSRRST (716 aa)) adopt a coiled-coil conformation. Residues 742–751 (SSVPDSSSSD) show a composition bias toward low complexity. A compositionally biased stretch (basic and acidic residues) spans 755–773 (EENRSLKTQLEESRRAASR). The tail stretch occupies residues 1122-1161 (QQSRRSTLGSTLSSDEEDNYSDTKSITSILTDSPLQTTSC). Low complexity predominate over residues 1124–1134 (SRRSTLGSTLS). Positions 1143–1161 (DTKSITSILTDSPLQTTSC) are enriched in polar residues.

It belongs to the cingulin family. Homodimer.

It is found in the cell junction. It localises to the tight junction. In terms of biological role, probably plays a role in the formation and regulation of the tight junction (TJ) paracellular permeability barrier. Note=Localizes to the apical junction complex composed of tight and adherens junctions. This is Cingulin from Danio rerio (Zebrafish).